Reading from the N-terminus, the 72-residue chain is ATP synthase subunit c (72 aa).

The next 2 helical transmembrane spans lie at Met1–Ile21 and Met48–Ile68.

It belongs to the ATPase C chain family. In terms of assembly, F-type ATPases have 2 components, F(1) - the catalytic core - and F(0) - the membrane proton channel. F(1) has five subunits: alpha(3), beta(3), gamma(1), delta(1), epsilon(1). F(0) has three main subunits: a(1), b(2) and c(10-14). The alpha and beta chains form an alternating ring which encloses part of the gamma chain. F(1) is attached to F(0) by a central stalk formed by the gamma and epsilon chains, while a peripheral stalk is formed by the delta and b chains.

Its subcellular location is the cell membrane. F(1)F(0) ATP synthase produces ATP from ADP in the presence of a proton or sodium gradient. F-type ATPases consist of two structural domains, F(1) containing the extramembraneous catalytic core and F(0) containing the membrane proton channel, linked together by a central stalk and a peripheral stalk. During catalysis, ATP synthesis in the catalytic domain of F(1) is coupled via a rotary mechanism of the central stalk subunits to proton translocation. In terms of biological role, key component of the F(0) channel; it plays a direct role in translocation across the membrane. A homomeric c-ring of between 10-14 subunits forms the central stalk rotor element with the F(1) delta and epsilon subunits. The sequence is that of ATP synthase subunit c from Geobacillus stearothermophilus (Bacillus stearothermophilus).